The primary structure comprises 239 residues: Vesicle-associated protein 1-2 (239 aa).

At methionine 1 the chain carries N-acetylmethionine. At 1–215 (MSNELLTIDP…RRESKRSKSG (215 aa)) the chain is on the cytoplasmic side. Serine 2 is modified (N-acetylserine; in Vesicle-associated protein 1-2, N-terminally processed). One can recognise an MSP domain in the interval 5–125 (LLTIDPVDLQ…EETKLRVVYV (121 aa)). The segment at 123–174 (VYVAPPRPPSPVREGSEEGSSPRASVSDNGNASDFTAAPRFSADRVDAQDNS) is disordered. At serine 132 the chain carries Phosphoserine. Polar residues predominate over residues 140 to 156 (EGSSPRASVSDNGNASD). Position 164 is a phosphoserine (serine 164). A coiled-coil region spans residues 169 to 215 (DAQDNSSEARALVTKLTEEKNSAVQLNNRLQQELDQLRRESKRSKSG). The chain crosses the membrane as a helical; Anchor for type IV membrane protein span at residues 216–236 (GIPFMYVLLVGLIGLILGYIM).

Belongs to the VAMP-associated protein (VAP) (TC 9.B.17) family. Interacts with ORP3A. Binds to VLG at the endomembrane system.

Its subcellular location is the endoplasmic reticulum membrane. In terms of biological role, vesicle-associated protein that binds the oxysterol-binding protein ORP3A and allows its targeting to the ER. The chain is Vesicle-associated protein 1-2 from Arabidopsis thaliana (Mouse-ear cress).